Reading from the N-terminus, the 353-residue chain is Protein CYTOKININ-RESPONSIVE GATA TRANSCRIPTION FACTOR 1 (353 aa).

The Nuclear localization signal 1 motif lies at isoleucine 137 to aspartate 144. The disordered stretch occupies residues alanine 142–glutamine 166. The segment at cysteine 178–cysteine 203 adopts a GATA-type zinc-finger fold. A Nuclear localization signal 2 motif is present at residues glutamate 244–aspartate 251.

It belongs to the type IV zinc-finger family. Class B subfamily. Mostly expressed in leaves and stems, and, at low levels, in roots.

Its subcellular location is the nucleus. Transcriptional regulator that specifically binds 5'-GATA-3' or 5'-GAT-3' motifs within gene promoters. Influences the expression of nuclear encoded chloroplast-targeted genes. Regulates chloroplast development and promotes chlorophyll accumulation. Modulates plant architecture (e.g. height, length and width of leaf blades, and flowering tillers production) and represses tillering, probably by modulating number of cells. Promotes senescence. Involved in grain filling, panicle development and starch production. The polypeptide is Protein CYTOKININ-RESPONSIVE GATA TRANSCRIPTION FACTOR 1 (Oryza sativa subsp. japonica (Rice)).